Reading from the N-terminus, the 66-residue chain is MLKIKNIRSVCKRFKKTASCNKFKYKKSNLRHILTKKSTKRKRKLRIKSFATKGDKKLILRCLPYK.

The protein belongs to the bacterial ribosomal protein bL35 family.

This is Large ribosomal subunit protein bL35 from Wigglesworthia glossinidia brevipalpis.